Consider the following 316-residue polypeptide: ATP synthase gamma chain (316 aa).

Belongs to the ATPase gamma chain family. In terms of assembly, F-type ATPases have 2 components, CF(1) - the catalytic core - and CF(0) - the membrane proton channel. CF(1) has five subunits: alpha(3), beta(3), gamma(1), delta(1), epsilon(1). CF(0) has three main subunits: a, b and c.

It is found in the cellular thylakoid membrane. Its function is as follows. Produces ATP from ADP in the presence of a proton gradient across the membrane. The gamma chain is believed to be important in regulating ATPase activity and the flow of protons through the CF(0) complex. The protein is ATP synthase gamma chain of Prochlorococcus marinus (strain AS9601).